We begin with the raw amino-acid sequence, 227 residues long: Cytochrome c oxidase subunit 2 (227 aa).

Residues 1 to 14 (MAYPMQLGFQDATS) are Mitochondrial intermembrane-facing. A helical membrane pass occupies residues 15–45 (PIMEELLHFHDHTLMIVFLISSLVLYIISLM). The Mitochondrial matrix segment spans residues 46–59 (LTTKLTHTSTMDAQ). The helical transmembrane segment at 60 to 87 (EVETVWTILPAIILILIALPSLRILYMM) threads the bilayer. Residues 88–227 (DEINNPSLTV…HFEEWSASMS (140 aa)) are Mitochondrial intermembrane-facing. Cu cation is bound by residues histidine 161, cysteine 196, glutamate 198, cysteine 200, histidine 204, and methionine 207. Mg(2+) is bound at residue glutamate 198.

The protein belongs to the cytochrome c oxidase subunit 2 family. Component of the cytochrome c oxidase (complex IV, CIV), a multisubunit enzyme composed of 14 subunits. The complex is composed of a catalytic core of 3 subunits MT-CO1, MT-CO2 and MT-CO3, encoded in the mitochondrial DNA, and 11 supernumerary subunits COX4I, COX5A, COX5B, COX6A, COX6B, COX6C, COX7A, COX7B, COX7C, COX8 and NDUFA4, which are encoded in the nuclear genome. The complex exists as a monomer or a dimer and forms supercomplexes (SCs) in the inner mitochondrial membrane with NADH-ubiquinone oxidoreductase (complex I, CI) and ubiquinol-cytochrome c oxidoreductase (cytochrome b-c1 complex, complex III, CIII), resulting in different assemblies (supercomplex SCI(1)III(2)IV(1) and megacomplex MCI(2)III(2)IV(2)). Found in a complex with TMEM177, COA6, COX18, COX20, SCO1 and SCO2. Interacts with TMEM177 in a COX20-dependent manner. Interacts with COX20. Interacts with COX16. Cu cation is required as a cofactor.

The protein resides in the mitochondrion inner membrane. The enzyme catalyses 4 Fe(II)-[cytochrome c] + O2 + 8 H(+)(in) = 4 Fe(III)-[cytochrome c] + 2 H2O + 4 H(+)(out). Component of the cytochrome c oxidase, the last enzyme in the mitochondrial electron transport chain which drives oxidative phosphorylation. The respiratory chain contains 3 multisubunit complexes succinate dehydrogenase (complex II, CII), ubiquinol-cytochrome c oxidoreductase (cytochrome b-c1 complex, complex III, CIII) and cytochrome c oxidase (complex IV, CIV), that cooperate to transfer electrons derived from NADH and succinate to molecular oxygen, creating an electrochemical gradient over the inner membrane that drives transmembrane transport and the ATP synthase. Cytochrome c oxidase is the component of the respiratory chain that catalyzes the reduction of oxygen to water. Electrons originating from reduced cytochrome c in the intermembrane space (IMS) are transferred via the dinuclear copper A center (CU(A)) of subunit 2 and heme A of subunit 1 to the active site in subunit 1, a binuclear center (BNC) formed by heme A3 and copper B (CU(B)). The BNC reduces molecular oxygen to 2 water molecules using 4 electrons from cytochrome c in the IMS and 4 protons from the mitochondrial matrix. The protein is Cytochrome c oxidase subunit 2 (MT-CO2) of Antilocapra americana (Pronghorn).